Reading from the N-terminus, the 742-residue chain is Glucosylceramidase (742 aa).

N-linked (GlcNAc...) asparagine glycosylation is found at Asn-37 and Asn-160. Glu-258 serves as the catalytic Proton donor. N-linked (GlcNAc...) asparagine glycosylation is present at Asn-388. The Nucleophile role is filled by Glu-492. Residues Asn-552, Asn-560, and Asn-698 are each glycosylated (N-linked (GlcNAc...) asparagine). A helical membrane pass occupies residues 701-721; sequence IAQILVAVVILLLGVLVAYYA.

Belongs to the glycosyl hydrolase 5 (cellulase A) family.

It localises to the membrane. The enzyme catalyses a beta-D-glucosyl-(1&lt;-&gt;1')-N-acylsphing-4-enine + H2O = an N-acylsphing-4-enine + D-glucose. Specifically hydrolyzes the glucosidic linkage in glucosylceramide. May prevent accumulation of aberrent glucosylceramide containing immature ceramide. The protein is Glucosylceramidase of Cryptococcus neoformans var. grubii serotype A (strain H99 / ATCC 208821 / CBS 10515 / FGSC 9487) (Filobasidiella neoformans var. grubii).